The primary structure comprises 462 residues: MTVTRFAPSPTGYLHIGGLRTALFSWLTARHNNGKFLLRIEDTDMARNSEEAKDAILKAFEWVGMSHDGEVVYQSKRFDLYKKYIDQLLEEGKAYKCYMTKEELNALREEQMAKKERTRYDGRYRDFTGTPPEGVKPVIRIKAPQEGTISFVDGVKGAMNIAANEVDDFIIARSDGTPTYNFVVAIDDALMGLTDVIRGDDHLYNTPKQIVVYNALGFSIPNFYHVAMINNEQGKKLSKRDGATDVMEYKALGFLPEALLNFLVRLGWSHGDQEIFSVEEMIEQFDPKDINKSASNYNLDKLLWLNAHYIKNKSNSELAELLKEFGVDISEHDKLEMLLDATKERGKTLVELAEQIKLILTAPTDYDEKAVKKAFKGEAKEILTDFIAMLQTWEKPLHLPVDYHEVMEKIVAEKEIGFGKIGMPLRVSLLGSMTGAGMDEVMAIIGVDETIERIERAVSTIA.

The 'HIGH' region signature appears at 8 to 18 (PSPTGYLHIGG). A 'KMSKS' region motif is present at residues 236-240 (KLSKR). Position 239 (lysine 239) interacts with ATP.

Belongs to the class-I aminoacyl-tRNA synthetase family. Glutamate--tRNA ligase type 1 subfamily. Monomer.

It localises to the cytoplasm. It carries out the reaction tRNA(Glu) + L-glutamate + ATP = L-glutamyl-tRNA(Glu) + AMP + diphosphate. Functionally, catalyzes the attachment of glutamate to tRNA(Glu) in a two-step reaction: glutamate is first activated by ATP to form Glu-AMP and then transferred to the acceptor end of tRNA(Glu). This Sulfurovum sp. (strain NBC37-1) protein is Glutamate--tRNA ligase 1.